A 173-amino-acid polypeptide reads, in one-letter code: Alkyl hydroperoxide reductase AhpD (173 aa).

C131 functions as the Proton donor in the catalytic mechanism. A disulfide bridge connects residues C131 and C134. The active-site Cysteine sulfenic acid (-SOH) intermediate is the C134.

Belongs to the AhpD family.

It carries out the reaction N(6)-[(R)-dihydrolipoyl]-L-lysyl-[lipoyl-carrier protein] + a hydroperoxide = N(6)-[(R)-lipoyl]-L-lysyl-[lipoyl-carrier protein] + an alcohol + H2O. In terms of biological role, antioxidant protein with alkyl hydroperoxidase activity. Required for the reduction of the AhpC active site cysteine residues and for the regeneration of the AhpC enzyme activity. This Rhizorhabdus wittichii (strain DSM 6014 / CCUG 31198 / JCM 15750 / NBRC 105917 / EY 4224 / RW1) (Sphingomonas wittichii) protein is Alkyl hydroperoxide reductase AhpD.